The primary structure comprises 89 residues: Small ribosomal subunit protein bS18 (89 aa).

Belongs to the bacterial ribosomal protein bS18 family. Part of the 30S ribosomal subunit. Forms a tight heterodimer with protein bS6.

In terms of biological role, binds as a heterodimer with protein bS6 to the central domain of the 16S rRNA, where it helps stabilize the platform of the 30S subunit. This chain is Small ribosomal subunit protein bS18, found in Phocaeicola vulgatus (strain ATCC 8482 / DSM 1447 / JCM 5826 / CCUG 4940 / NBRC 14291 / NCTC 11154) (Bacteroides vulgatus).